The chain runs to 1241 residues: Anion exchange protein 2 (1241 aa).

The disordered stretch occupies residues 1 to 240 (MSSAPRRPAK…RSYNLQERRR (240 aa)). The Cytoplasmic segment spans residues 1 to 707 (MSSAPRRPAK…SDFRDALDPQ (707 aa)). Composition is skewed to basic and acidic residues over residues 37–49 (ELHR…RFEE) and 58–75 (GGEE…EYHR). Composition is skewed to basic residues over residues 76–85 (QSSHHIHHPL) and 94–110 (RRRK…RRRP). S113, S132, S144, S170, S172, and S173 each carry phosphoserine. Over residues 120 to 133 (TIEEGEEDEDEASE) the composition is skewed to acidic residues. The span at 141–155 (TQPSPVSTPSSVQFF) shows a compositional bias: low complexity. T183 carries the phosphothreonine modification. A compositionally biased stretch (low complexity) spans 189 to 209 (GAQAGTQVEEAEAEAVAVASG). Gly residues predominate over residues 210–219 (TAGGDDGGAS). S243 is subject to Phosphoserine. Residue T257 is modified to Phosphothreonine. Residue K274 is modified to N6-methyllysine. The disordered stretch occupies residues 288-320 (LVRKNAKGSTQSGREGREPGPTPRARPRAPHKP). S443 carries the phosphoserine modification. A disordered region spans residues 449–471 (SLLGHHHGQGAESDPHVTEPLMG). Transmembrane regions (helical) follow at residues 708 to 731 (CLAA…GLLG), 737 to 774 (LIGV…LLVF), 784 to 816 (SNHL…SFLV), and 826 to 847 (IFAF…VKIF). The segment at 708–1241 (CLAAVIFIYF…DEYNEMPMPV (534 aa)) is membrane (anion exchange). Over 848–900 (QEHPLHGCSASNSSEVDGGENMTWAGARPTLGPGNRSLAGQSGQGKPRGQPNT) the chain is Extracellular. Residues N859, N868, and N882 are each glycosylated (N-linked (GlcNAc...) asparagine). A helical transmembrane segment spans residues 901 to 918 (ALLSLVLMAGTFFIAFFL). Over 919–933 (RKFKNSRFFPGRIRR) the chain is Cytoplasmic. A run of 5 helical transmembrane segments spans residues 934–954 (VIGD…DYSI), 988–1010 (PFPV…LIFM), 1036–1059 (LLLI…AATV), 1091–1136 (VTGL…IQFY), and 1163–1199 (MHLF…TVPL). The S-palmitoyl cysteine moiety is linked to residue C1173.

The protein belongs to the anion exchanger (TC 2.A.31) family. As to expression, expressed in the liver, stomach, kidney, prostate, thyroid and rectum. In terms of tissue distribution, expressed in the liver and kidney.

It is found in the apical cell membrane. Its subcellular location is the basolateral cell membrane. It carries out the reaction hydrogencarbonate(in) + chloride(out) = hydrogencarbonate(out) + chloride(in). In terms of biological role, sodium-independent anion exchanger which mediates the electroneutral exchange of chloride for bicarbonate ions across the cell membrane. Plays an important role in osteoclast differentiation and function. Regulates bone resorption and calpain-dependent actin cytoskeleton organization in osteoclasts via anion exchange-dependent control of pH. Essential for intracellular pH regulation in CD8(+) T-cells upon CD3 stimulation, modulating CD8(+) T-cell responses. The sequence is that of Anion exchange protein 2 (SLC4A2) from Homo sapiens (Human).